A 266-amino-acid polypeptide reads, in one-letter code: Zinc transporter ZupT (266 aa).

8 helical membrane-spanning segments follow: residues 8–28 (LALT…ALMV), 35–55 (FLTF…FVEI), 70–90 (HAAG…IWLI), 123–143 (GIFT…AVFF), 152–172 (GVVI…AVAV), 185–205 (FSYS…GYAL), 209–229 (FLSP…MVYI), and 246–266 (IAIS…LMLA). Fe(2+)-binding residues include asparagine 134 and glutamate 137. Zn(2+) is bound by residues glutamate 137 and histidine 162. Residues asparagine 163, glutamate 166, and glutamate 195 each contribute to the Fe(2+) site. Residue glutamate 166 participates in Zn(2+) binding.

The protein belongs to the ZIP transporter (TC 2.A.5) family. ZupT subfamily.

The protein resides in the cell inner membrane. It catalyses the reaction Zn(2+)(in) = Zn(2+)(out). In terms of biological role, mediates zinc uptake. May also transport other divalent cations. The chain is Zinc transporter ZupT from Chlorobium limicola (strain DSM 245 / NBRC 103803 / 6330).